Consider the following 211-residue polypeptide: Late expression factor 7 (211 aa).

Its function is as follows. Involved in late/very late gene activation. The chain is Late expression factor 7 (LEF-7) from Orgyia pseudotsugata multicapsid polyhedrosis virus (OpMNPV).